Reading from the N-terminus, the 470-residue chain is Chromosomal replication initiator protein DnaA (470 aa).

A domain I, interacts with DnaA modulators region spans residues 1–68 (MENFWSLCLG…SALAEEVLST (68 aa)). The interval 68–133 (TPVQIELALY…KKPKTLTETS (66 aa)) is domain II. Positions 134-350 (GLNPAFRFDN…GALNRIIAMA (217 aa)) are domain III, AAA+ region. Residues glycine 178, glycine 180, lysine 181, and threonine 182 each contribute to the ATP site. Residues 351–470 (NFTGHAIDVS…IAVLIQVIRD (120 aa)) form a domain IV, binds dsDNA region.

Belongs to the DnaA family. As to quaternary structure, oligomerizes as a right-handed, spiral filament on DNA at oriC.

The protein localises to the cytoplasm. Its function is as follows. Plays an essential role in the initiation and regulation of chromosomal replication. ATP-DnaA binds to the origin of replication (oriC) to initiate formation of the DNA replication initiation complex once per cell cycle. Binds the DnaA box (a 9 base pair repeat at the origin) and separates the double-stranded (ds)DNA. Forms a right-handed helical filament on oriC DNA; dsDNA binds to the exterior of the filament while single-stranded (ss)DNA is stabiized in the filament's interior. The ATP-DnaA-oriC complex binds and stabilizes one strand of the AT-rich DNA unwinding element (DUE), permitting loading of DNA polymerase. After initiation quickly degrades to an ADP-DnaA complex that is not apt for DNA replication. Binds acidic phospholipids. The sequence is that of Chromosomal replication initiator protein DnaA from Methylobacillus flagellatus (strain ATCC 51484 / DSM 6875 / VKM B-1610 / KT).